The chain runs to 685 residues: Serine/threonine-protein kinase PLK2 (685 aa).

The segment at 24–71 is disordered; the sequence is KGCGADSKKKRPPQPPEESQPPQSQAQVPPAAAHHHHHHSHSGPEISR. A compositionally biased stretch (low complexity) spans 43–55; sequence QPPQSQAQVPPAA. In terms of domain architecture, Protein kinase spans 82-334; it reads YCRGKVLGKG…LDDIIRHDFF (253 aa). ATP is bound by residues 88–96 and Lys-111; that span reads LGKGGFAKC. The Proton acceptor role is filled by Asp-205. Phosphothreonine is present on Thr-239. The disordered stretch occupies residues 406–433; the sequence is SITQQPSKHRTDEELQPPTTTVARSGTP. 2 POLO box domains span residues 503-581 and 601-685; these read WVTK…YMEE and YLLQ…QRCN.

It belongs to the protein kinase superfamily. Ser/Thr protein kinase family. CDC5/Polo subfamily. As to quaternary structure, interacts with NSF; causing NSF dissociation from GRIA2. Interacts with CIB1. Catalytic activity is enhanced by phosphorylation of Thr-239.

Its subcellular location is the cytoplasm. The protein localises to the cytoskeleton. The protein resides in the microtubule organizing center. It localises to the centrosome. It is found in the centriole. Its subcellular location is the cell projection. The protein localises to the dendrite. The catalysed reaction is L-seryl-[protein] + ATP = O-phospho-L-seryl-[protein] + ADP + H(+). The enzyme catalyses L-threonyl-[protein] + ATP = O-phospho-L-threonyl-[protein] + ADP + H(+). Its activity is regulated as follows. Activated by phosphorylation of Thr-239. Once activated, activity is stimulated by binding target proteins. Its function is as follows. Tumor suppressor serine/threonine-protein kinase involved in synaptic plasticity, centriole duplication and G1/S phase transition. Polo-like kinases act by binding and phosphorylating proteins that are already phosphorylated on a specific motif recognized by the POLO box domains. Phosphorylates CPAP, NPM1, RAPGEF2, RASGRF1, SNCA, SIPA1L1 and SYNGAP1. Plays a key role in synaptic plasticity and memory by regulating the Ras and Rap protein signaling: required for overactivity-dependent spine remodeling by phosphorylating the Ras activator RASGRF1 and the Rap inhibitor SIPA1L1 leading to their degradation by the proteasome. Conversely, phosphorylates the Rap activator RAPGEF2 and the Ras inhibitor SYNGAP1, promoting their activity. Also regulates synaptic plasticity independently of kinase activity, via its interaction with NSF that disrupts the interaction between NSF and the GRIA2 subunit of AMPARs, leading to a rapid rundown of AMPAR-mediated current that occludes long term depression. Required for procentriole formation and centriole duplication by phosphorylating CPAP and NPM1, respectively. Its induction by p53/TP53 suggests that it may participate in the mitotic checkpoint following stress. In Pongo abelii (Sumatran orangutan), this protein is Serine/threonine-protein kinase PLK2 (PLK2).